The following is a 233-amino-acid chain: 2,3-bisphosphoglycerate-dependent phosphoglycerate mutase (233 aa).

Substrate is bound by residues 8-15, 21-22, arginine 60, 87-90, lysine 98, 114-115, and 183-184; these read RHGESEWN, TG, ERHY, RR, and GN. The active-site Tele-phosphohistidine intermediate is the histidine 9. Catalysis depends on glutamate 87, which acts as the Proton donor/acceptor.

This sequence belongs to the phosphoglycerate mutase family. BPG-dependent PGAM subfamily.

It catalyses the reaction (2R)-2-phosphoglycerate = (2R)-3-phosphoglycerate. It participates in carbohydrate degradation; glycolysis; pyruvate from D-glyceraldehyde 3-phosphate: step 3/5. Functionally, catalyzes the interconversion of 2-phosphoglycerate and 3-phosphoglycerate. The sequence is that of 2,3-bisphosphoglycerate-dependent phosphoglycerate mutase from Lactococcus lactis subsp. cremoris (strain MG1363).